A 260-amino-acid chain; its full sequence is Dehydrin ERD10 (260 aa).

Disordered stretches follow at residues 1–187 (MAEE…EEEK), 197–216 (KLPG…TTPL), and 240–260 (KLPG…KVSD). Alanine 2 is subject to N-acetylalanine. A compositionally biased stretch (basic and acidic residues) spans 26–44 (EIKERGMFDFLKKKEEVKP). Position 61 is a phosphoserine (serine 61). Composition is skewed to basic and acidic residues over residues 67-102 (VAKH…DKLH), 130-140 (IVEGDHVKTVE), 148-162 (DRIK…KPGG), 176-187 (SVEDHKPEEEEK), and 197-207 (KLPGHSKKPED). 2 consecutive repeat copies span residues 184–204 (EEEK…HSKK) and 227–247 (PEEK…YHAK). Residues 184-247 (EEEKKGFMDK…KEKLPGYHAK (64 aa)) are 2 X 21 AA repeats, Lys-rich.

This sequence belongs to the plant dehydrin family. In stems, cauline leaves, roots and flowers. Low levels found in maturing seeds. Absent in dry seeds.

This is Dehydrin ERD10 (ERD10) from Arabidopsis thaliana (Mouse-ear cress).